The following is a 22-amino-acid chain: Brevinin-1OKa (22 aa).

Lys-22 is modified (lysine amide).

As to expression, expressed by the skin glands.

It is found in the secreted. Antimicrobial peptide. Active against Gram-negative bacterium E.coli (MIC=12.5 uM) and against Gram-positive bacterium S.aureus (MIC=12.5 uM). The protein is Brevinin-1OKa of Nidirana okinavana (Kampira Falls frog).